The sequence spans 305 residues: Pseudouridine-5'-phosphate glycosidase (305 aa).

Residue Glu-30 is the Proton donor of the active site. 2 residues coordinate substrate: Lys-91 and Val-111. Asp-143 lines the Mn(2+) pocket. Substrate is bound at residue 145-147 (SAD). The active-site Nucleophile is Lys-164.

Belongs to the pseudouridine-5'-phosphate glycosidase family. In terms of assembly, homotrimer. It depends on Mn(2+) as a cofactor.

It catalyses the reaction D-ribose 5-phosphate + uracil = psi-UMP + H2O. Catalyzes the reversible cleavage of pseudouridine 5'-phosphate (PsiMP) to ribose 5-phosphate and uracil. Functions biologically in the cleavage direction, as part of a pseudouridine degradation pathway. This is Pseudouridine-5'-phosphate glycosidase from Mesorhizobium japonicum (strain LMG 29417 / CECT 9101 / MAFF 303099) (Mesorhizobium loti (strain MAFF 303099)).